Consider the following 294-residue polypeptide: Indole-3-glycerol phosphate synthase (294 aa).

This sequence belongs to the TrpC family.

The enzyme catalyses 1-(2-carboxyphenylamino)-1-deoxy-D-ribulose 5-phosphate + H(+) = (1S,2R)-1-C-(indol-3-yl)glycerol 3-phosphate + CO2 + H2O. It functions in the pathway amino-acid biosynthesis; L-tryptophan biosynthesis; L-tryptophan from chorismate: step 4/5. The protein is Indole-3-glycerol phosphate synthase of Parasynechococcus marenigrum (strain WH8102).